A 217-amino-acid polypeptide reads, in one-letter code: Probable transaldolase (217 aa).

Lys-83 acts as the Schiff-base intermediate with substrate in catalysis.

Belongs to the transaldolase family. Type 3B subfamily.

It is found in the cytoplasm. The catalysed reaction is D-sedoheptulose 7-phosphate + D-glyceraldehyde 3-phosphate = D-erythrose 4-phosphate + beta-D-fructose 6-phosphate. The protein operates within carbohydrate degradation; pentose phosphate pathway; D-glyceraldehyde 3-phosphate and beta-D-fructose 6-phosphate from D-ribose 5-phosphate and D-xylulose 5-phosphate (non-oxidative stage): step 2/3. Transaldolase is important for the balance of metabolites in the pentose-phosphate pathway. The sequence is that of Probable transaldolase from Pseudothermotoga lettingae (strain ATCC BAA-301 / DSM 14385 / NBRC 107922 / TMO) (Thermotoga lettingae).